Reading from the N-terminus, the 241-residue chain is Probable phosphatase Cthe_0111 (241 aa).

Residues His8, His10, His16, His41, Glu74, His102, His132, Asp192, and His194 each coordinate Zn(2+).

This sequence belongs to the PHP family. Requires Zn(2+) as cofactor.

The polypeptide is Probable phosphatase Cthe_0111 (Acetivibrio thermocellus (strain ATCC 27405 / DSM 1237 / JCM 9322 / NBRC 103400 / NCIMB 10682 / NRRL B-4536 / VPI 7372) (Clostridium thermocellum)).